Consider the following 385-residue polypeptide: Transcription termination factor 2, mitochondrial (385 aa).

A mitochondrion-targeting transit peptide spans 1–35; sequence MLWKLLLRSQSCRLCSFRKMRSPPKYRPFLACFTY.

It belongs to the mTERF family. As to quaternary structure, monomer. As to expression, expressed in skeletal muscle, heart, liver and pancreas.

The protein localises to the mitochondrion. It is found in the mitochondrion matrix. The protein resides in the mitochondrion nucleoid. Binds mitochondrial DNA and plays a role in the regulation of transcription of mitochondrial mRNA and rRNA species. The polypeptide is Transcription termination factor 2, mitochondrial (MTERF2) (Homo sapiens (Human)).